Reading from the N-terminus, the 724-residue chain is Ribosomal protein S6 kinase alpha-1 (724 aa).

A Phosphoserine modification is found at Ser-54. The 249-residue stretch at 62–310 (FELLKVLGQG…AEEIKRHIFY (249 aa)) folds into the Protein kinase 1 domain. Residues 68–76 (LGQGSFGKV) and Lys-94 contribute to the ATP site. Asp-187 functions as the Proton acceptor in the catalytic mechanism. Ser-221 is subject to Phosphoserine; by PDPK1. Residue Ser-296 is modified to Phosphoserine. An AGC-kinase C-terminal domain is found at 311-380 (STIDWNKLYR…VATGLMEDDG (70 aa)). The residue at position 348 (Thr-348) is a Phosphothreonine. A phosphoserine mark is found at Ser-352, Ser-358, and Ser-369. A Protein kinase 2 domain is found at 407–664 (YVVKETIGVG…AKQVLQHPWI (258 aa)). ATP is bound by residues 413–421 (IGVGSYSVC) and Lys-436. The active-site Proton acceptor is Asp-524. Thr-562 is modified (phosphothreonine). Ser-721 is subject to Phosphoserine.

The protein belongs to the protein kinase superfamily. AGC Ser/Thr protein kinase family. S6 kinase subfamily. Forms a complex with either MAPK1/ERK2 or MAPK3/ERK1 in quiescent cells. Transiently dissociates following mitogenic stimulation. Interacts with ETV1/ER81 and FGFR1. Mg(2+) serves as cofactor. Activated by phosphorylation at Ser-221 by PDPK1. Autophosphorylated on Ser-369, as part of the activation process. May be phosphorylated at Thr-348 and Ser-352 by MAPK1/ERK2 and MAPK3/ERK1. Post-translationally, N-terminal myristoylation results in an activated kinase in the absence of added growth factors. Intestine, thymus, and lung.

The protein localises to the nucleus. The protein resides in the cytoplasm. The catalysed reaction is L-seryl-[protein] + ATP = O-phospho-L-seryl-[protein] + ADP + H(+). It carries out the reaction L-threonyl-[protein] + ATP = O-phospho-L-threonyl-[protein] + ADP + H(+). Upon extracellular signal or mitogen stimulation, phosphorylated at Thr-562 in the C-terminal kinase domain (CTKD) by MAPK1/ERK2 and MAPK3/ERK1. The activated CTKD then autophosphorylates Ser-369, allowing binding of PDPK1, which in turn phosphorylates Ser-221 in the N-terminal kinase domain (NTDK) leading to the full activation of the protein and subsequent phosphorylation of the substrates by the NTKD. Its function is as follows. Serine/threonine-protein kinase that acts downstream of ERK (MAPK1/ERK2 and MAPK3/ERK1) signaling and mediates mitogenic and stress-induced activation of the transcription factors CREB1, ETV1/ER81 and NR4A1/NUR77, regulates translation through RPS6 and EIF4B phosphorylation, and mediates cellular proliferation, survival, and differentiation by modulating mTOR signaling and repressing pro-apoptotic function of BAD and DAPK1. In fibroblast, is required for EGF-stimulated phosphorylation of CREB1, which results in the subsequent transcriptional activation of several immediate-early genes. In response to mitogenic stimulation (EGF and PMA), phosphorylates and activates NR4A1/NUR77 and ETV1/ER81 transcription factors and the cofactor CREBBP. Upon insulin-derived signal, acts indirectly on the transcription regulation of several genes by phosphorylating GSK3B at 'Ser-9' and inhibiting its activity. Phosphorylates RPS6 in response to serum or EGF via an mTOR-independent mechanism and promotes translation initiation by facilitating assembly of the pre-initiation complex. In response to insulin, phosphorylates EIF4B, enhancing EIF4B affinity for the EIF3 complex and stimulating cap-dependent translation. Is involved in the mTOR nutrient-sensing pathway by directly phosphorylating TSC2 at 'Ser-1798', which potently inhibits TSC2 ability to suppress mTOR signaling, and mediates phosphorylation of RPTOR, which regulates mTORC1 activity and may promote rapamycin-sensitive signaling independently of the PI3K/AKT pathway. Also involved in feedback regulation of mTORC1 and mTORC2 by phosphorylating DEPTOR. Mediates cell survival by phosphorylating the pro-apoptotic proteins BAD and DAPK1 and suppressing their pro-apoptotic function. Promotes the survival of hepatic stellate cells by phosphorylating CEBPB in response to the hepatotoxin carbon tetrachloride (CCl4). Mediates induction of hepatocyte prolifration by TGFA through phosphorylation of CEBPB. Is involved in cell cycle regulation by phosphorylating the CDK inhibitor CDKN1B, which promotes CDKN1B association with 14-3-3 proteins and prevents its translocation to the nucleus and inhibition of G1 progression. Phosphorylates EPHA2 at 'Ser-897', the RPS6KA-EPHA2 signaling pathway controls cell migration. In response to mTORC1 activation, phosphorylates EIF4B at 'Ser-406' and 'Ser-422' which stimulates bicarbonate cotransporter SLC4A7 mRNA translation, increasing SLC4A7 protein abundance and function. This chain is Ribosomal protein S6 kinase alpha-1 (Rps6ka1), found in Mus musculus (Mouse).